Consider the following 198-residue polypeptide: Probable nicotinate-nucleotide adenylyltransferase (198 aa).

This sequence belongs to the NadD family.

The catalysed reaction is nicotinate beta-D-ribonucleotide + ATP + H(+) = deamido-NAD(+) + diphosphate. It participates in cofactor biosynthesis; NAD(+) biosynthesis; deamido-NAD(+) from nicotinate D-ribonucleotide: step 1/1. Catalyzes the reversible adenylation of nicotinate mononucleotide (NaMN) to nicotinic acid adenine dinucleotide (NaAD). The chain is Probable nicotinate-nucleotide adenylyltransferase from Chlorobium phaeobacteroides (strain BS1).